The sequence spans 588 residues: Ribonuclease Y (588 aa).

Residues 7-27 (VLLVAVLLLTVVVVGAVLVGV) form a helical membrane-spanning segment. A KH domain is found at 278–359 (VVSVLHLPGD…HRIEEVHDLA (82 aa)). The HD domain occupies 404-497 (VLKHLVESAH…TQASDACSGG (94 aa)).

The protein belongs to the RNase Y family.

It localises to the cell membrane. Its function is as follows. Endoribonuclease that initiates mRNA decay. This is Ribonuclease Y from Salinispora tropica (strain ATCC BAA-916 / DSM 44818 / JCM 13857 / NBRC 105044 / CNB-440).